The following is a 153-amino-acid chain: MTPTLETKYVFTITARIGDVTSAGEIGTGVRRIIPILGGEVKGEGISGKVLPFGADFQIIRPNELIELEAKYAFETDDGAVVYVENAGIRFGPVELLQKLKCGEPVDPKLIYFRTRPRFETGHPNYQWLMQHLFIGSAARHADRVVIDVHQVL.

It belongs to the UPF0311 family.

This is UPF0311 protein Rpal_1987 from Rhodopseudomonas palustris (strain TIE-1).